We begin with the raw amino-acid sequence, 138 residues long: uncharacterized protein (138 aa).

2 helical membrane passes run 21–43 (TAFI…AGGA) and 48–65 (SLIA…YAII).

The protein resides in the cell membrane. This is an uncharacterized protein from Archaeoglobus fulgidus (strain ATCC 49558 / DSM 4304 / JCM 9628 / NBRC 100126 / VC-16).